Consider the following 158-residue polypeptide: Transcription factor BTF3 homolog 4 (158 aa).

The 66-residue stretch at 33–98 (TADDKKLQSS…AEAKPITEML (66 aa)) folds into the NAC-A/B domain. A disordered region spans residues 124 to 158 (VLDSKAPKSEDIDEEDDDVPDLAENFDEASKNEAN). The segment covering 134 to 150 (DIDEEDDDVPDLAENFD) has biased composition (acidic residues).

The protein belongs to the NAC-beta family.

This is Transcription factor BTF3 homolog 4 (BTF3L4) from Gallus gallus (Chicken).